Here is a 492-residue protein sequence, read N- to C-terminus: Coagulation factor X (492 aa).

The signal sequence occupies residues 1 to 23; it reads MAGLLHLVLLSTALGGLLRPAGS. A propeptide spanning residues 24-40 is cleaved from the precursor; that stretch reads VFLPRDQAHRVLQRARR. Residues 41 to 85 form the Gla domain; it reads ANSFLEEVKQGNLERECLEEACSLEEAREVFEDAEQTDEFWSKYK. Residues glutamate 46, glutamate 47, glutamate 54, glutamate 56, glutamate 59, glutamate 60, glutamate 65, glutamate 66, glutamate 69, glutamate 72, glutamate 75, and glutamate 79 each carry the 4-carboxyglutamate modification. Cysteine 57 and cysteine 62 are oxidised to a cystine. An EGF-like 1; calcium-binding domain is found at 86–122; the sequence is DGDQCEGHPCLNQGHCKDGIGDYTCTCAEGFEGKNCE. 11 cysteine pairs are disulfide-bonded: cysteine 90/cysteine 101, cysteine 95/cysteine 110, cysteine 112/cysteine 121, cysteine 129/cysteine 140, cysteine 136/cysteine 149, cysteine 151/cysteine 164, cysteine 172/cysteine 341, cysteine 240/cysteine 245, cysteine 260/cysteine 276, cysteine 389/cysteine 403, and cysteine 414/cysteine 442. Position 103 is a (3R)-3-hydroxyaspartate (aspartate 103). The EGF-like 2 domain maps to 125–165; it reads TREICSLDNGGCDQFCREERSEVRCSCAHGYVLGDDSKSCV. Positions 183 to 233 are cleaved as a propeptide — activation peptide; it reads WAIHTSEDALDASELEHYDPADLSPTESSLDLLGLNRTEPSAGEDGSQVVR. Tyrosine 200 is subject to Sulfotyrosine. Residue threonine 208 is glycosylated (O-linked (GalNAc...) threonine). Asparagine 218 is a glycosylation site (N-linked (GlcNAc...) asparagine). In terms of domain architecture, Peptidase S1 spans 234 to 466; it reads IVGGRDCAEG…FLKWIDKIMK (233 aa). Catalysis depends on charge relay system residues histidine 275 and aspartate 321. Serine 418 (charge relay system) is an active-site residue. Residues 472–492 form a disordered region; the sequence is AGSRGHSEAPATWTVPPPLPL. The propeptide at 476–492 is may be removed but is not necessary for activation; sequence GHSEAPATWTVPPPLPL. An O-linked (GalNAc...) threonine glycan is attached at threonine 485.

It belongs to the peptidase S1 family. The two chains are formed from a single-chain precursor by the excision of two Arg residues and are held together by 1 or more disulfide bonds. Forms a heterodimer with SERPINA5. Interacts (activated) with guianensin, an anticoagulant protein from Simulium guianense saliva. Interacts (activated) with simukunin, an anticoagulant protein from Simulium vittatum saliva. The vitamin K-dependent, enzymatic carboxylation of some glutamate residues allows the modified protein to bind calcium. Post-translationally, N- and O-glycosylated. In terms of processing, proteolytically cleaved and activated by cathepsin CTSG. The activation peptide is cleaved by factor IXa (in the intrinsic pathway), or by factor VIIa (in the extrinsic pathway). The iron and 2-oxoglutarate dependent 3-hydroxylation of aspartate and asparagine is (R) stereospecific within EGF domains.

The protein localises to the secreted. It carries out the reaction Selective cleavage of Arg-|-Thr and then Arg-|-Ile bonds in prothrombin to form thrombin.. With respect to regulation, inhibited by SERPINA5. Its function is as follows. Factor Xa is a vitamin K-dependent glycoprotein that converts prothrombin to thrombin in the presence of factor Va, calcium and phospholipid during blood clotting. Factor Xa activates pro-inflammatory and pro-fibrotic signaling pathways in a protease-activated receptor (PAR)-dependent manner. The protein is Coagulation factor X (F10) of Bos taurus (Bovine).